A 564-amino-acid chain; its full sequence is Eukaryotic translation initiation factor 3 subunit L (564 aa).

Residues 331–537 form the PCI domain; sequence DAIRVFANIL…IHIADTKVAR (207 aa).

It belongs to the eIF-3 subunit L family. In terms of assembly, component of the eukaryotic translation initiation factor 3 (eIF-3) complex, which is composed of 13 subunits: EIF3A, EIF3B, EIF3C, EIF3D, EIF3E, EIF3F, EIF3G, EIF3H, EIF3I, EIF3J, EIF3K, EIF3L and EIF3M.

The protein resides in the cytoplasm. Its function is as follows. Component of the eukaryotic translation initiation factor 3 (eIF-3) complex, which is involved in protein synthesis of a specialized repertoire of mRNAs and, together with other initiation factors, stimulates binding of mRNA and methionyl-tRNAi to the 40S ribosome. The eIF-3 complex specifically targets and initiates translation of a subset of mRNAs involved in cell proliferation. In Gallus gallus (Chicken), this protein is Eukaryotic translation initiation factor 3 subunit L.